A 38-amino-acid chain; its full sequence is MKVLASVKCICRNCKIIKRKRVVRVICSSDARHKQRQG.

The protein belongs to the bacterial ribosomal protein bL36 family.

The sequence is that of Large ribosomal subunit protein bL36 from Polynucleobacter necessarius subsp. necessarius (strain STIR1).